Here is a 255-residue protein sequence, read N- to C-terminus: Type III pantothenate kinase (255 aa).

6–13 (DIGNSNIV) is an ATP binding site. Residues tyrosine 100 and 107 to 110 (GSDR) contribute to the substrate site. The active-site Proton acceptor is aspartate 109. Aspartate 129 lines the K(+) pocket. Threonine 132 is an ATP binding site. Threonine 184 contributes to the substrate binding site.

Belongs to the type III pantothenate kinase family. In terms of assembly, homodimer. NH4(+) is required as a cofactor. K(+) serves as cofactor.

It localises to the cytoplasm. It carries out the reaction (R)-pantothenate + ATP = (R)-4'-phosphopantothenate + ADP + H(+). It participates in cofactor biosynthesis; coenzyme A biosynthesis; CoA from (R)-pantothenate: step 1/5. Functionally, catalyzes the phosphorylation of pantothenate (Pan), the first step in CoA biosynthesis. The chain is Type III pantothenate kinase from Brevibacillus brevis (strain 47 / JCM 6285 / NBRC 100599).